Consider the following 132-residue polypeptide: CDGSH iron-sulfur domain-containing protein 2 homolog (132 aa).

Over 1 to 35 the chain is Lumenal; that stretch reads MEPISHVVKSSLPNYLSSLPIPDSFGGWFKLSFKD. Residues 36–58 traverse the membrane as a helical segment; sequence WLALIPPTVVVAGLGYTTYLAFC. Over 59-132 the chain is Cytoplasmic; that stretch reads PAARCAGKDS…NVGPVVVKKK (74 aa). Cysteine 98, cysteine 100, cysteine 109, and histidine 113 together coordinate [2Fe-2S] cluster.

It belongs to the CISD protein family. CISD2 subfamily. Requires [2Fe-2S] cluster as cofactor.

It is found in the endoplasmic reticulum membrane. The chain is CDGSH iron-sulfur domain-containing protein 2 homolog from Drosophila persimilis (Fruit fly).